Reading from the N-terminus, the 187-residue chain is Elongation factor P (187 aa).

Belongs to the elongation factor P family.

The protein resides in the cytoplasm. Its pathway is protein biosynthesis; polypeptide chain elongation. In terms of biological role, involved in peptide bond synthesis. Stimulates efficient translation and peptide-bond synthesis on native or reconstituted 70S ribosomes in vitro. Probably functions indirectly by altering the affinity of the ribosome for aminoacyl-tRNA, thus increasing their reactivity as acceptors for peptidyl transferase. This chain is Elongation factor P, found in Corynebacterium glutamicum (strain R).